A 2483-amino-acid polypeptide reads, in one-letter code: Cation-independent mannose-6-phosphate receptor (2483 aa).

An N-terminal signal peptide occupies residues 1-35 (MRAVQLGPVPSGPRVALLPPLLLLLLLAAAGSAQA). Residues 36–2295 (QAVDLDALCS…YKGLSERSQA (2260 aa)) lie on the Lumenal side of the membrane. MRH domains are found at residues 42 to 158 (ALCS…ACKK), 167 to 315 (VPCY…ACHR), 321 to 463 (ESCS…ACIK), 468 to 613 (LLCG…ACVL), 619 to 755 (ENCT…ACPE), 758 to 917 (LECM…ACPI), 925 to 1072 (QACS…ACTP), 1075 to 1212 (VDCQ…ACPV), and 1218 to 1356 (DNCQ…ACPP). Cystine bridges form between Cys44-Cys64 and Cys72-Cys79. A glycan (N-linked (GlcNAc...) asparagine) is linked at Asn107. Intrachain disulfides connect Cys112–Cys144, Cys129–Cys156, Cys169–Cys207, Cys223–Cys230, Cys270–Cys301, Cys283–Cys313, Cys323–Cys361, and Cys369–Cys377. 2 N-linked (GlcNAc...) asparagine glycosylation sites follow: Asn395 and Asn430. 4 disulfide bridges follow: Cys415-Cys449, Cys429-Cys461, Cys470-Cys513, and Cys525-Cys532. Asn537 and Asn575 each carry an N-linked (GlcNAc...) asparagine glycan. 2 disulfides stabilise this stretch: Cys566–Cys599 and Cys580–Cys611. A glycan (N-linked (GlcNAc...) asparagine) is linked at Asn620. 5 cysteine pairs are disulfide-bonded: Cys621–Cys658, Cys666–Cys673, Cys724–Cys753, Cys760–Cys807, and Cys816–Cys823. N-linked (GlcNAc...) asparagine glycosylation is present at Asn740. N-linked (GlcNAc...) asparagine glycosylation is present at Asn864. Intrachain disulfides connect Cys868–Cys903, Cys886–Cys915, Cys927–Cys964, Cys970–Cys981, Cys1035–Cys1070, Cys1077–Cys1118, and Cys1127–Cys1135. Asn944 carries an N-linked (GlcNAc...) asparagine glycan. N-linked (GlcNAc...) asparagine glycosylation occurs at Asn1157. 4 disulfide bridges follow: Cys1170–Cys1198, Cys1183–Cys1210, Cys1220–Cys1255, and Cys1263–Cys1275. An N-linked (GlcNAc...) asparagine glycan is attached at Asn1239. N-linked (GlcNAc...) asparagine glycosylation is present at Asn1305. Intrachain disulfides connect Cys1312/Cys1342 and Cys1326/Cys1354. Asn1358 is a glycosylation site (N-linked (GlcNAc...) asparagine). 6 consecutive MRH domains span residues 1360–1501 (TECS…ACPV), 1507–1641 (DDCQ…ACEQ), 1643–1790 (TECT…VCPD), 1795–1982 (QGCA…VCPP), 1985–2120 (MECK…ACAV), and 2128–2273 (VNGT…VCPL). 2 cysteine pairs are disulfide-bonded: Cys1362–Cys1401 and Cys1413–Cys1420. An N-linked (GlcNAc...) asparagine glycan is attached at Asn1423. 20 disulfide bridges follow: Cys1454/Cys1487, Cys1469/Cys1499, Cys1509/Cys1546, Cys1552/Cys1559, Cys1591/Cys1627, Cys1607/Cys1639, Cys1645/Cys1688, Cys1699/Cys1706, Cys1743/Cys1776, Cys1759/Cys1788, Cys1797/Cys1832, Cys1843/Cys1849, Cys1886/Cys1968, Cys1896/Cys1920, Cys1910/Cys1935, Cys1950/Cys1980, Cys1987/Cys2022, Cys2032/Cys2039, Cys2075/Cys2106, and Cys2089/Cys2118. Asn1532 carries an N-linked (GlcNAc...) asparagine glycan. N-linked (GlcNAc...) asparagine glycosylation is present at Asn1649. N-linked (GlcNAc...) asparagine glycosylation is present at Asn1750. N-linked (GlcNAc...) asparagine glycosylation occurs at Asn1809. Residues 1891–1937 (DDGEPCVFPFIYKGKSYDECVLEGRAKLWCSKTANYDRDHEWGFCRQ) enclose the Fibronectin type-II domain. Asn2078 is a glycosylation site (N-linked (GlcNAc...) asparagine). Asn2129 carries N-linked (GlcNAc...) asparagine glycosylation. Intrachain disulfides connect Cys2181/Cys2187, Cys2225/Cys2259, and Cys2241/Cys2271. A helical membrane pass occupies residues 2296-2316 (VGAVLSLLLVALTGCLLALLL). Residues 2317–2483 (HKKERRETVI…DDSDEDLLHI (167 aa)) are Cytoplasmic-facing. Position 2342 is an N6-acetyllysine (Lys2342). A Phosphoserine modification is found at Ser2401. Residues 2415–2483 (SGRGAEVESS…DDSDEDLLHI (69 aa)) form a disordered region. Position 2417 is an omega-N-methylarginine (Arg2417). Basic and acidic residues-rich tracts occupy residues 2434-2451 (VLKEREGERLGLVRGEKA) and 2471-2483 (SFHDDSDEDLLHI). Phosphoserine occurs at positions 2471 and 2476.

The protein belongs to the MRL1/IGF2R family. In terms of assembly, binds HA-I and HA-II plasma membrane adapters. Interacts with DPP4; the interaction is direct. Binds GGA1, GGA2 and GGA3. Interacts with the heterotrimeric retromer cargo-selective complex (CSC), formed by VPS26 (VPS26A or VPS26B), VPS29 and VPS35; which is involved in retrograde trafficking of the receptor from endosomes to the Golgi apparatus. Post-translationally, palmitoylated. Undergoes cysteine S-palmitoylation which promotes interaction with the retromer cargo-selective complex which mediates its retrograde trafficking to the Golgi apparatus.

The protein localises to the golgi apparatus membrane. The protein resides in the endosome membrane. Functionally, mediates the transport of phosphorylated lysosomal enzymes from the Golgi complex and the cell surface to lysosomes. Lysosomal enzymes bearing phosphomannosyl residues bind specifically to mannose-6-phosphate receptors in the Golgi apparatus and the resulting receptor-ligand complex is transported to an acidic prelysosomal compartment where the low pH mediates the dissociation of the complex. The receptor is then recycled back to the Golgi for another round of trafficking through its binding to the retromer. This receptor also binds IGF2. Acts as a positive regulator of T-cell coactivation by binding DPP4. The sequence is that of Cation-independent mannose-6-phosphate receptor (Igf2r) from Mus musculus (Mouse).